Consider the following 80-residue polypeptide: RNA-binding protein Hfq (80 aa).

The region spanning 10 to 69 is the Sm domain; that stretch reads DPFLNLLRKEHVPVSIYLVNGIKLQGHIESFDQYVVLLRNTVTQMVYKHAISTVVPGRPV.

It belongs to the Hfq family. In terms of assembly, homohexamer.

In terms of biological role, RNA chaperone that binds small regulatory RNA (sRNAs) and mRNAs to facilitate mRNA translational regulation in response to envelope stress, environmental stress and changes in metabolite concentrations. Also binds with high specificity to tRNAs. In Leptothrix cholodnii (strain ATCC 51168 / LMG 8142 / SP-6) (Leptothrix discophora (strain SP-6)), this protein is RNA-binding protein Hfq.